A 379-amino-acid polypeptide reads, in one-letter code: Cytochrome b (379 aa).

A run of 4 helical transmembrane segments spans residues 33 to 53 (FGSLLGVCLMIQILTGLFLAM), 77 to 98 (WLIRYLHANGASMFFICLFIHV), 113 to 133 (WNIGIILFLTTMATAFVGYVL), and 178 to 198 (FFAFHFILPFIITAFALVHLL). Positions 83 and 97 each coordinate heme b. 2 residues coordinate heme b: His182 and His196. His201 provides a ligand contact to a ubiquinone. The next 4 helical transmembrane spans lie at 226 to 246 (IKDLLGIFLLLLALMILALFF), 288 to 308 (LGGVLALILSILILAIFPLLN), 320 to 340 (ITQTIYWTFIANLLVLTWIGG), and 347 to 367 (FTTIGQIASITYFTXIIILMP).

This sequence belongs to the cytochrome b family. The cytochrome bc1 complex contains 11 subunits: 3 respiratory subunits (MT-CYB, CYC1 and UQCRFS1), 2 core proteins (UQCRC1 and UQCRC2) and 6 low-molecular weight proteins (UQCRH/QCR6, UQCRB/QCR7, UQCRQ/QCR8, UQCR10/QCR9, UQCR11/QCR10 and a cleavage product of UQCRFS1). This cytochrome bc1 complex then forms a dimer. Heme b serves as cofactor.

The protein resides in the mitochondrion inner membrane. Its function is as follows. Component of the ubiquinol-cytochrome c reductase complex (complex III or cytochrome b-c1 complex) that is part of the mitochondrial respiratory chain. The b-c1 complex mediates electron transfer from ubiquinol to cytochrome c. Contributes to the generation of a proton gradient across the mitochondrial membrane that is then used for ATP synthesis. This Akodon affinis (Colombian grass mouse) protein is Cytochrome b (MT-CYB).